We begin with the raw amino-acid sequence, 1311 residues long: Clustered mitochondria protein homolog (1311 aa).

The interval 1–46 (MAATNEVIPTSENPSDVSGSSQKLATEETALANGVDHEEEDSGEAG) is disordered. Polar residues predominate over residues 7-24 (VIPTSENPSDVSGSSQKL). A Clu domain is found at 335–579 (DITRTQENYL…RVTPLDITWM (245 aa)). Disordered stretches follow at residues 629 to 691 (ERKR…QERI) and 915 to 965 (QSQT…VNAS). A compositionally biased stretch (basic and acidic residues) spans 655–691 (EASKSDEPTENGELAKKADESDKDAEPSKPAADQERI). A compositionally biased stretch (polar residues) spans 915-930 (QSQTEAAAAPPTTNGE). TPR repeat units lie at residues 1034–1067 (ARVY…SERT), 1076–1109 (LLNY…WKVV), and 1118–1151 (ITTI…CEEV). Residues 1236–1311 (VSPRVTLGQT…RGGAAAAAGK (76 aa)) are disordered. Polar residues predominate over residues 1242–1253 (LGQTQLQPQVGQ). A compositionally biased stretch (basic and acidic residues) spans 1259–1279 (AGRDSRSSRGLDSRSIDELLK). A compositionally biased stretch (basic residues) spans 1289 to 1303 (KNKKRPGRSNPKRRG).

The protein belongs to the CLU family. In terms of assembly, may associate with the eukaryotic translation initiation factor 3 (eIF-3) complex.

It localises to the cytoplasm. Its function is as follows. mRNA-binding protein involved in proper cytoplasmic distribution of mitochondria. The protein is Clustered mitochondria protein homolog of Sclerotinia sclerotiorum (strain ATCC 18683 / 1980 / Ss-1) (White mold).